We begin with the raw amino-acid sequence, 383 residues long: MMGYEQMNQMTMTTTAMMKNYNKKGLINTPQKKMTRRSVSAIDGGAAATAKEGDRRQNIKTLDLSGMSLASLSASSINLASISKLDLSNNNIQKIPESLVARMLNLWALDLQSNQLKTLPNSIGCLSKLKFLNVSGNYLQSLPKTIEDCRSLEELNANFNELTRLPDAIGFELTNLTKLSVNSNKLVLLPNSVSYLTSLRVLDARLNRLSSLPEDLENLVNLQVLNVSQNFQHLTTLPYSVGLLISLVELDVSYNGITVLPDSLGCLRRIQKLSVEGNPLISPPFEVVEQGLEALKQYMSEKMTESYKKTPTKKKSWGIGKLVKYGLSSSPGRSTGREDGKEGFINVSDYRQIDGIASPRHVSLFNPRRLLSPLSAYFSPPRY.

10 LRR repeats span residues 56–79, 80–102, 104–126, 127–149, 151–173, 174–197, 199–219, 221–244, 245–268, and 270–290; these read RQNIKTLDLSGMSLASLSASSINL, ASISKLDLSNNNIQKIPESLVAR, LNLWALDLQSNQLKTLPNSIGCL, SKLKFLNVSGNYLQSLPKTIEDC, SLEELNANFNELTRLPDAIGFEL, TNLTKLSVNSNKLVLLPNSVSYLT, LRVLDARLNRLSSLPEDLENL, NLQVLNVSQNFQHLTTLPYSVGLL, ISLVELDVSYNGITVLPDSLGCLR, and IQKLSVEGNPLISPPFEVVEQ. The GVYW; degenerate motif lies at 291 to 298; that stretch reads GLEALKQY.

This sequence belongs to the SHOC2 family. Widely expressed except flowers.

In terms of biological role, leucine-rich repeat protein that likely mediates protein interactions, possibly in the context of signal transduction. The polypeptide is Plant intracellular Ras-group-related LRR protein 8 (PIRL8) (Arabidopsis thaliana (Mouse-ear cress)).